The primary structure comprises 103 residues: Co-chaperonin GroES (103 aa).

The disordered stretch occupies residues 31 to 67 (GGILLPDTAKEKPQVGEVAQVGPGKRNEDGSRQSPEV).

It belongs to the GroES chaperonin family. Heptamer of 7 subunits arranged in a ring. Interacts with the chaperonin GroEL.

The protein resides in the cytoplasm. Together with the chaperonin GroEL, plays an essential role in assisting protein folding. The GroEL-GroES system forms a nano-cage that allows encapsulation of the non-native substrate proteins and provides a physical environment optimized to promote and accelerate protein folding. GroES binds to the apical surface of the GroEL ring, thereby capping the opening of the GroEL channel. In Prochlorococcus marinus (strain NATL2A), this protein is Co-chaperonin GroES.